Reading from the N-terminus, the 490-residue chain is Betaine aldehyde dehydrogenase (490 aa).

Positions 27 and 93 each coordinate K(+). Residue 150–152 (GAW) coordinates NAD(+). K162 serves as the catalytic Charge relay system. 176–179 (KPSE) lines the NAD(+) pocket. K(+) is bound at residue V180. 230–233 (GTDT) is a binding site for NAD(+). L246 serves as a coordination point for K(+). E252 acts as the Proton acceptor in catalysis. NAD(+) is bound by residues G254, C286, and E387. The active-site Nucleophile is C286. C286 bears the Cysteine sulfenic acid (-SOH) mark. Positions 457 and 460 each coordinate K(+). The active-site Charge relay system is the E464.

It belongs to the aldehyde dehydrogenase family. Dimer of dimers. K(+) serves as cofactor.

The enzyme catalyses betaine aldehyde + NAD(+) + H2O = glycine betaine + NADH + 2 H(+). It functions in the pathway amine and polyamine biosynthesis; betaine biosynthesis via choline pathway; betaine from betaine aldehyde: step 1/1. In terms of biological role, involved in the biosynthesis of the osmoprotectant glycine betaine. Catalyzes the irreversible oxidation of betaine aldehyde to the corresponding acid. The chain is Betaine aldehyde dehydrogenase from Pseudomonas fluorescens (strain Pf0-1).